Reading from the N-terminus, the 172-residue chain is MNLKEHIRVIENFPKEGISFKDVTTILQDGKVLNYTVDKLAENLKDKKIDKIVGPEARGFLFGTPLAYKLGVGFVPVRKKGKLPYETISCKYDLEYGQDELQIHKDSIKKGDKVAIVDDLLATGGTIASVVKLVEELGGEVVNVSFVIELTDLKGKDKLEGYDINSLVQYNI.

It belongs to the purine/pyrimidine phosphoribosyltransferase family. In terms of assembly, homodimer.

It localises to the cytoplasm. The enzyme catalyses AMP + diphosphate = 5-phospho-alpha-D-ribose 1-diphosphate + adenine. The protein operates within purine metabolism; AMP biosynthesis via salvage pathway; AMP from adenine: step 1/1. Catalyzes a salvage reaction resulting in the formation of AMP, that is energically less costly than de novo synthesis. The polypeptide is Adenine phosphoribosyltransferase (Clostridium botulinum (strain Loch Maree / Type A3)).